A 362-amino-acid polypeptide reads, in one-letter code: Probable dual-specificity RNA methyltransferase RlmN (362 aa).

Glu105 serves as the catalytic Proton acceptor. The Radical SAM core domain maps to 111-344 (HEYGNSICVT…VTIRREQGHD (234 aa)). Cys118 and Cys349 are joined by a disulfide. Positions 125, 129, and 132 each coordinate [4Fe-4S] cluster. S-adenosyl-L-methionine-binding positions include 175–176 (GE), Ser207, 230–232 (SLH), and Asn306. The S-methylcysteine intermediate role is filled by Cys349.

It belongs to the radical SAM superfamily. RlmN family. It depends on [4Fe-4S] cluster as a cofactor.

The protein localises to the cytoplasm. The catalysed reaction is adenosine(2503) in 23S rRNA + 2 reduced [2Fe-2S]-[ferredoxin] + 2 S-adenosyl-L-methionine = 2-methyladenosine(2503) in 23S rRNA + 5'-deoxyadenosine + L-methionine + 2 oxidized [2Fe-2S]-[ferredoxin] + S-adenosyl-L-homocysteine. The enzyme catalyses adenosine(37) in tRNA + 2 reduced [2Fe-2S]-[ferredoxin] + 2 S-adenosyl-L-methionine = 2-methyladenosine(37) in tRNA + 5'-deoxyadenosine + L-methionine + 2 oxidized [2Fe-2S]-[ferredoxin] + S-adenosyl-L-homocysteine. Functionally, specifically methylates position 2 of adenine 2503 in 23S rRNA and position 2 of adenine 37 in tRNAs. This Bacillus cereus (strain ATCC 14579 / DSM 31 / CCUG 7414 / JCM 2152 / NBRC 15305 / NCIMB 9373 / NCTC 2599 / NRRL B-3711) protein is Probable dual-specificity RNA methyltransferase RlmN.